Consider the following 110-residue polypeptide: Large ribosomal subunit protein uL22 (110 aa).

Belongs to the universal ribosomal protein uL22 family. In terms of assembly, part of the 50S ribosomal subunit.

Its function is as follows. This protein binds specifically to 23S rRNA; its binding is stimulated by other ribosomal proteins, e.g. L4, L17, and L20. It is important during the early stages of 50S assembly. It makes multiple contacts with different domains of the 23S rRNA in the assembled 50S subunit and ribosome. The globular domain of the protein is located near the polypeptide exit tunnel on the outside of the subunit, while an extended beta-hairpin is found that lines the wall of the exit tunnel in the center of the 70S ribosome. This is Large ribosomal subunit protein uL22 from Syntrophotalea carbinolica (strain DSM 2380 / NBRC 103641 / GraBd1) (Pelobacter carbinolicus).